Here is a 197-residue protein sequence, read N- to C-terminus: uncharacterized protein (197 aa).

This is an uncharacterized protein from Bacillus subtilis (strain 168).